Consider the following 493-residue polypeptide: Argininosuccinate lyase (493 aa).

This sequence belongs to the lyase 1 family. Argininosuccinate lyase subfamily.

The protein localises to the cytoplasm. The enzyme catalyses 2-(N(omega)-L-arginino)succinate = fumarate + L-arginine. It functions in the pathway amino-acid biosynthesis; L-arginine biosynthesis; L-arginine from L-ornithine and carbamoyl phosphate: step 3/3. This is Argininosuccinate lyase from Methanospirillum hungatei JF-1 (strain ATCC 27890 / DSM 864 / NBRC 100397 / JF-1).